The sequence spans 432 residues: Probable anion transporter 5 (432 aa).

A signal peptide spans 1 to 23 (MKLSNIPQRYVIVFLTFLSTCVC). The next 11 helical transmembrane spans lie at 50–70 (TILS…GWAA), 78–98 (VLLL…LDPN), 101–121 (GLLV…FPSI), 140–160 (ITTS…PALV), 164–184 (GPES…LLWI), 229–249 (LPVW…YVLM), 273–293 (VPYL…DYLI), 305–325 (KFLN…LPMF), 331–351 (VILC…GFAV), 360–380 (YAGI…IIGV), and 405–425 (VVFF…LLFS).

It belongs to the major facilitator superfamily. Sodium/anion cotransporter (TC 2.A.1.14) family. Ubiquitous.

It localises to the golgi apparatus membrane. In terms of biological role, inorganic phosphate and probable anion transporter. This Arabidopsis thaliana (Mouse-ear cress) protein is Probable anion transporter 5 (ANTR5).